The following is a 260-amino-acid chain: Pro-opiomelanocortin (260 aa).

The signal sequence occupies residues Met-1–Ser-25. Position 26 is a pyrrolidone carboxylic acid (Gln-26). Residue Phe-86 is modified to Phenylalanine amide. N-linked (GlcNAc...) asparagine glycosylation is present at Asn-90. The propeptide occupies Glu-104–Ser-138. Val-153 bears the Valine amide mark.

It belongs to the POMC family. Post-translationally, specific enzymatic cleavages at paired basic residues yield the different active peptides.

The protein resides in the secreted. Stimulates the adrenal glands to release cortisol. Its function is as follows. Anorexigenic peptide. Increases the pigmentation of skin by increasing melanin production in melanocytes. In terms of biological role, increases the pigmentation of skin by increasing melanin production in melanocytes. Functionally, endogenous orexigenic opiate. Endogenous opiate. This is Pro-opiomelanocortin (pomc) from Pelophylax ridibundus (Marsh frog).